A 128-amino-acid polypeptide reads, in one-letter code: Large ribosomal subunit protein bL12 (128 aa).

The protein belongs to the bacterial ribosomal protein bL12 family. As to quaternary structure, homodimer. Part of the ribosomal stalk of the 50S ribosomal subunit. Forms a multimeric L10(L12)X complex, where L10 forms an elongated spine to which 2 to 4 L12 dimers bind in a sequential fashion. Binds GTP-bound translation factors.

In terms of biological role, forms part of the ribosomal stalk which helps the ribosome interact with GTP-bound translation factors. Is thus essential for accurate translation. In Corynebacterium jeikeium (strain K411), this protein is Large ribosomal subunit protein bL12.